The primary structure comprises 118 residues: Vesicle-associated membrane protein 1 (118 aa).

The span at 1 to 15 shows a compositional bias: low complexity; sequence MSAPAQPPTEGAEGA. The segment at 1–36 is disordered; that stretch reads MSAPAQPPTEGAEGAAPGGGPPGPPPNMTSNRRLQQ. The Cytoplasmic portion of the chain corresponds to 1–96; it reads MSAPAQPPTE…KRKYWWKNCK (96 aa). Positions 33–93 constitute a v-SNARE coiled-coil homology domain; that stretch reads RLQQTQAQVE…AKLKRKYWWK (61 aa). Position 63 is a phosphoserine (Ser63). A helical; Anchor for type IV membrane protein membrane pass occupies residues 97–116; it reads MMIMLGAICAIIVVVIVIYF. At 117–118 the chain is on the vesicular side; it reads FA.

The protein belongs to the synaptobrevin family. As to quaternary structure, interacts with VAPA and VAPB.

It is found in the cytoplasmic vesicle. The protein localises to the secretory vesicle. It localises to the synaptic vesicle membrane. The protein resides in the synapse. Its subcellular location is the synaptosome. It is found in the cytoplasmic vesicle membrane. Involved in the targeting and/or fusion of transport vesicles to their target membrane. This Bos taurus (Bovine) protein is Vesicle-associated membrane protein 1 (VAMP1).